A 163-amino-acid polypeptide reads, in one-letter code: Lipoprotein signal peptidase (163 aa).

4 helical membrane-spanning segments follow: residues 9-29 (AWPWLWFSVLVILLDQLSKYL), 42-62 (ILPFLNFTLNYNTGAAFSFLG), 67-87 (WQIIFFAAISFVVSIFLILWL), and 93-113 (SEIMMLLGLSLIIGGALGNFI). Catalysis depends on residues Asp123 and Asp141. The helical transmembrane segment at 137–157 (FNVADSAICVGVFLLIVHMLL) threads the bilayer.

Belongs to the peptidase A8 family.

Its subcellular location is the cell inner membrane. It catalyses the reaction Release of signal peptides from bacterial membrane prolipoproteins. Hydrolyzes -Xaa-Yaa-Zaa-|-(S,diacylglyceryl)Cys-, in which Xaa is hydrophobic (preferably Leu), and Yaa (Ala or Ser) and Zaa (Gly or Ala) have small, neutral side chains.. It participates in protein modification; lipoprotein biosynthesis (signal peptide cleavage). This protein specifically catalyzes the removal of signal peptides from prolipoproteins. The chain is Lipoprotein signal peptidase from Coxiella burnetii (strain RSA 493 / Nine Mile phase I).